We begin with the raw amino-acid sequence, 378 residues long: Ribosomal RNA large subunit methyltransferase G (378 aa).

It belongs to the methyltransferase superfamily. RlmG family.

The protein localises to the cytoplasm. The catalysed reaction is guanosine(1835) in 23S rRNA + S-adenosyl-L-methionine = N(2)-methylguanosine(1835) in 23S rRNA + S-adenosyl-L-homocysteine + H(+). Specifically methylates the guanine in position 1835 (m2G1835) of 23S rRNA. The chain is Ribosomal RNA large subunit methyltransferase G from Salmonella gallinarum (strain 287/91 / NCTC 13346).